We begin with the raw amino-acid sequence, 86 residues long: DNA-directed RNA polymerase subunit omega (86 aa).

Belongs to the RNA polymerase subunit omega family. The RNAP catalytic core consists of 2 alpha, 1 beta, 1 beta' and 1 omega subunit. When a sigma factor is associated with the core the holoenzyme is formed, which can initiate transcription.

The catalysed reaction is RNA(n) + a ribonucleoside 5'-triphosphate = RNA(n+1) + diphosphate. Functionally, promotes RNA polymerase assembly. Latches the N- and C-terminal regions of the beta' subunit thereby facilitating its interaction with the beta and alpha subunits. The polypeptide is DNA-directed RNA polymerase subunit omega (Psychrobacter sp. (strain PRwf-1)).